The sequence spans 191 residues: Threonylcarbamoyl-AMP synthase (191 aa).

In terms of domain architecture, YrdC-like spans 10 to 191 (VPKLTQCVRT…DLYTDAIIRA (182 aa)).

Belongs to the SUA5 family. TsaC subfamily.

The protein resides in the cytoplasm. The catalysed reaction is L-threonine + hydrogencarbonate + ATP = L-threonylcarbamoyladenylate + diphosphate + H2O. Its function is as follows. Required for the formation of a threonylcarbamoyl group on adenosine at position 37 (t(6)A37) in tRNAs that read codons beginning with adenine. Catalyzes the conversion of L-threonine, HCO(3)(-)/CO(2) and ATP to give threonylcarbamoyl-AMP (TC-AMP) as the acyladenylate intermediate, with the release of diphosphate. This is Threonylcarbamoyl-AMP synthase from Saccharophagus degradans (strain 2-40 / ATCC 43961 / DSM 17024).